Here is a 702-residue protein sequence, read N- to C-terminus: Phosphatase and actin regulator 4 (702 aa).

3 disordered regions span residues 1–37 (MEDP…KSKF), 72–194 (RKPR…SSGG), and 222–363 (NLSV…PFPA). The RPEL 1 repeat unit spans residues 63 to 88 (EVLERKISMRKPREELVKRGVLLEDP). Residues 72-84 (RKPREELVKRGVL) are compositionally biased toward basic and acidic residues. The segment covering 106 to 120 (GHTTPIGNARSSSPV) has biased composition (polar residues). Phosphoserine occurs at positions 116, 118, 131, and 147. Polar residues predominate over residues 147-156 (STGSQPNSEA). The segment covering 163 to 173 (VPKPPLLPPKR) has biased composition (pro residues). Residues 233–250 (TLPAAPASTNTTATPSLT) show a composition bias toward low complexity. 2 positions are modified to phosphoserine: serine 270 and serine 291. Over residues 301–318 (PSTSVPTLESAAAITTKT) the composition is skewed to polar residues. Phosphoserine is present on residues serine 342 and serine 344. Positions 342–362 (SPSPPLPTHIPPEPPRTPPFP) are enriched in pro residues. The residue at position 358 (threonine 358) is a Phosphothreonine. Residue serine 427 is modified to Phosphoserine. The residue at position 432 (threonine 432) is a Phosphothreonine. A phosphoserine mark is found at serine 443, serine 453, and serine 464. The tract at residues 469–536 (IEMLKVPDDE…EEDEDESYQS (68 aa)) is disordered. Residues 484–497 (TCPSTFSEEMTPTS) are compositionally biased toward polar residues. Positions 508 to 518 (EEEEKESDSDS) are enriched in acidic residues. Serine 514, serine 516, serine 557, and serine 590 each carry phosphoserine. RPEL repeat units lie at residues 583–608 (NTLI…QPKN) and 621–646 (RRLT…RFNE). The tract at residues 592–615 (RPTPEELEQRNILQPKNEADRQAE) is disordered. Position 628 is a phosphoserine (serine 628).

It belongs to the phosphatase and actin regulator family. Binds PPP1CA and actin.

It localises to the cytoplasm. Its subcellular location is the cell projection. The protein resides in the lamellipodium. Functionally, regulator of protein phosphatase 1 (PP1) required for neural tube and optic fissure closure, and enteric neural crest cell (ENCCs) migration during development. Acts as an activator of PP1 by interacting with PPP1CA and preventing phosphorylation of PPP1CA at 'Thr-320'. During neural tube closure, localizes to the ventral neural tube and activates PP1, leading to down-regulate cell proliferation within cranial neural tissue and the neural retina. Also acts as a regulator of migration of enteric neural crest cells (ENCCs) by activating PP1, leading to dephosphorylation and subsequent activation of cofilin (COF1 or COF2) and repression of the integrin signaling through the RHO/ROCK pathway. In Homo sapiens (Human), this protein is Phosphatase and actin regulator 4 (PHACTR4).